The chain runs to 188 residues: UPF0301 protein XCV3063 (188 aa).

Belongs to the UPF0301 (AlgH) family.

In Xanthomonas euvesicatoria pv. vesicatoria (strain 85-10) (Xanthomonas campestris pv. vesicatoria), this protein is UPF0301 protein XCV3063.